The sequence spans 727 residues: Protein EXECUTER 1, chloroplastic (727 aa).

Disordered stretches follow at residues 1-51 (MAAA…SRLF), 65-102 (LAGA…AGSG), 340-381 (ISSS…LPSD), and 413-455 (DEDD…SGDE). Residues 1-83 (MAAAVSTAPR…PRRRVSSVVR (83 aa)) constitute a chloroplast transit peptide. Low complexity-rich tracts occupy residues 19 to 33 (SSSC…ASMS) and 42 to 51 (PSSGSGSRLF). A compositionally biased stretch (acidic residues) spans 413 to 441 (DEDDENDNPEDEIESSEDIGDGDNVEEAE).

The protein resides in the plastid. The protein localises to the chloroplast. Its function is as follows. Together with EX2, enables higher plants to perceive singlet oxygen as a stress signal in plastid that activates a genetically determined nuclear stress response program which triggers a programmed cell death (PCD). This transfer of singlet oxygen-induced stress-related signals from the plastid to the nucleus that triggers genetically controlled PCD pathway is unique to photosynthetic eukaryotes and operates under mild stress conditions, impeding photosystem II (PSII) without causing photooxidative damage of the plant. The protein is Protein EXECUTER 1, chloroplastic of Oryza sativa subsp. japonica (Rice).